Consider the following 486-residue polypeptide: Glutamyl-tRNA(Gln) amidotransferase subunit A (486 aa).

Residues K74 and S149 each act as charge relay system in the active site. S173 functions as the Acyl-ester intermediate in the catalytic mechanism.

This sequence belongs to the amidase family. GatA subfamily. As to quaternary structure, heterotrimer of A, B and C subunits.

The enzyme catalyses L-glutamyl-tRNA(Gln) + L-glutamine + ATP + H2O = L-glutaminyl-tRNA(Gln) + L-glutamate + ADP + phosphate + H(+). Its function is as follows. Allows the formation of correctly charged Gln-tRNA(Gln) through the transamidation of misacylated Glu-tRNA(Gln) in organisms which lack glutaminyl-tRNA synthetase. The reaction takes place in the presence of glutamine and ATP through an activated gamma-phospho-Glu-tRNA(Gln). The sequence is that of Glutamyl-tRNA(Gln) amidotransferase subunit A from Prochlorococcus marinus (strain MIT 9313).